Reading from the N-terminus, the 655-residue chain is Forkhead box protein O1 (655 aa).

Disordered stretches follow at residues 1-63 and 116-158; these read MAEA…SASA and GCLH…SRRN. A Phosphothreonine; by PKB/AKT1 or PKB/AKT2 and SGK1 modification is found at threonine 24. The span at 33-63 shows a compositional bias: low complexity; the sequence is SQSNSATSSPAPSGSAAANPDAAAGLPSASA. The segment covering 120–141 has biased composition (pro residues); sequence PAPPQPPPPGPLSQHPPVPPAA. The fork-head DNA-binding region spans 159–235; sequence AWGNLSYADL…VQNEGTGKSS (77 aa). 2 DNA-binding regions span residues 211–218 and 234–237; these read NSIRHNLS and SSWW. Phosphoserine; by STK4/MST1 is present on residues serine 212, serine 218, serine 234, and serine 235. A disordered region spans residues 234–344; it reads SSWWMLNPEG…QDDLGEGDVH (111 aa). N6-acetyllysine occurs at positions 245 and 248. Position 249 is a phosphoserine; by CDK1 (serine 249). Omega-N-methylarginine; by PRMT1 occurs at positions 251 and 253. The Nuclear localization signal signature appears at 251–253; it reads RRR. Phosphoserine; by PKB/AKT1 and SGK1 is present on serine 256. N6-acetyllysine is present on residues lysine 262, lysine 265, and lysine 274. Over residues 264–275 the composition is skewed to basic residues; the sequence is AKSRSRAAKKKA. A sufficient for interaction with NLK region spans residues 283–563; that stretch reads GAGDSPGSQF…RLTQVKTPVQ (281 aa). Residues serine 287 and serine 298 each carry the phosphoserine modification. A compositionally biased stretch (polar residues) spans 309–326; the sequence is NWSTFRPRTSSNASTISG. Phosphoserine; by PKB/AKT1 is present on serine 319. Serine 322 carries the post-translational modification Phosphoserine; by CK1 and SGK1. Serine 325 is modified (phosphoserine; by CK1). Serine 329 carries the post-translational modification Phosphoserine; by DYRK1A. Phosphothreonine is present on threonine 333. Residues 363–459 are required for interaction with RUNX2; that stretch reads SEISNPENME…GGMSQYNCAP (97 aa). N6-acetyllysine is present on lysine 423. A Required for interaction with SIRT1 motif is present at residues 462–466; sequence LKELL. Polar residues predominate over residues 507–534; sequence YGSQASHNKMMNPSSHTHPGHAQQTSAV. Residues 507–537 are disordered; that stretch reads YGSQASHNKMMNPSSHTHPGHAQQTSAVNGR.

As to quaternary structure, interacts with LRPPRC. Interacts with RUNX2; the interaction inhibits RUNX2 transcriptional activity and mediates the IGF1/insulin-dependent BGLAP expression in osteoblasts Interacts with PPP2R1A; the interaction regulates the dephosphorylation of FOXO1 at Thr-24 and Ser-256 leading to its nuclear import. Interacts (acetylated form) with PPARG. Interacts with XBP1 isoform 2; this interaction is direct and leads to FOXO1 ubiquitination and degradation via the proteasome pathway. Interacts with NLK. Interacts with SIRT1; the interaction results in the deacetylation of FOXO1 leading to activation of FOXO1-mediated transcription of genes involved in DNA repair and stress resistance. Binds to CDK1. Interacts with the 14-3-3 proteins, YWHAG and YWHAZ; the interactions require insulin-stimulated phosphorylation on Thr-24, promote nuclear exit and loss of transcriptional activity. Interacts with SKP2; the interaction ubiquitinates FOXO1 leading to its proteasomal degradation. The interaction requires the presence of KRIT1. Interacts (via the C-terminal half) with ATF4 (via its DNA-binding domain); the interaction occurs in osteoblasts, regulates glucose homeostasis via suppression of beta-cell proliferation and subsequent decrease in insulin production. Interacts with PRMT1; the interaction methylates FOXO1, prevents PKB/AKT1 phosphorylation and retains FOXO1 in the nucleus. Interacts with EP300 and CREBBP; the interactions acetylate FOXO1. Interacts with SIRT2; the interaction is disrupted in response to oxidative stress or serum deprivation, leading to increased level of acetylated FOXO1, which promotes stress-induced autophagy by stimulating E1-like activating enzyme ATG7. Interacts (acetylated form) with ATG7; the interaction is increased in response to oxidative stress or serum deprivation and promotes the autophagic process leading to cell death. Interacts (via the Fork-head domain) with CEBPA; the interaction increases when FOXO1 is deacetylated. Interacts with WDFY2. Forms a complex with WDFY2 and AKT1. Interacts with CRY1. Interacts with PPIA/CYPA; the interaction promotes FOXO1 dephosphorylation, nuclear accumulation and transcriptional activity. Interacts with TOX4; FOXO1 is required for full induction of TOX4-dependent activity and the interaction is inhibited by insulin. Interacts (when phosphorylated on Ser-256) with STUB1/CHIP. Post-translationally, phosphorylation by NLK promotes nuclear export and inhibits the transcriptional activity. In response to growth factors, phosphorylation on Thr-24, Ser-256 and Ser-322 by PKB/AKT1 promotes nuclear export and inactivation of transactivational activity. Phosphorylation on Thr-24 is required for binding 14-3-3 proteins. Phosphorylation of Ser-256 decreases DNA-binding activity and promotes the phosphorylation of Thr-24 and Ser-319, permitting phosphorylation of Ser-322 and Ser-325, probably by CDK1, leading to nuclear exclusion and loss of function. Stress signals, such as response to oxygen or nitric oxide, attenuate the PKB/AKT1-mediated phosphorylation leading to nuclear retention. Phosphorylation of Ser-329 is independent of IGF1 and leads to reduced function. Dephosphorylated on Thr-24 and Ser-256 by PP2A in beta-cells under oxidative stress leading to nuclear retention. Phosphorylation of Ser-249 by CDK1 disrupts binding of 14-3-3 proteins leading to nuclear accumulation and has no effect on DNA-binding nor transcriptional activity. Phosphorylation by STK4/MST1 on Ser-212, upon oxidative stress, inhibits binding to 14-3-3 proteins and nuclear export. PPIA/CYPA promotes its dephosphorylation on Ser-256. In terms of processing, ubiquitinated by SKP2. Ubiquitination leads to proteasomal degradation. Ubiquitinated by STUB1/CHIP; when Ser-256 is phosphorylated. Methylation inhibits AKT1-mediated phosphorylation at Ser-256 and is increased by oxidative stress. Post-translationally, acetylated. Acetylation at Lys-262, Lys-265 and Lys-274 are necessary for autophagic cell death induction. Deacetylated by SIRT2 in response to oxidative stress or serum deprivation, thereby negatively regulating FOXO1-mediated autophagic cell death. Once in the nucleus, acetylated by CREBBP/EP300. Acetylation diminishes the interaction with target DNA and attenuates the transcriptional activity. It increases the phosphorylation at Ser-256. Deacetylation by SIRT1 results in reactivation of the transcriptional activity. Oxidative stress by hydrogen peroxide treatment appears to promote deacetylation and uncoupling of insulin-induced phosphorylation. By contrast, resveratrol acts independently of acetylation. Acetylated at Lys-423, promoting its localization to the nucleus and transcription factor activity. Deacetylation at Lys-423 by SIRT6, promotes its translocation into the cytoplasm, preventing its transcription factor activity. Deacetylation and subsequent inhibition by SIRT6 has different effects depending on cell types: it inhibits gluconeogenesis in hepatocytes, promotes glucose sensing in pancreatic beta-cells and regulates lipid catabolism in brown adipocytes. As to expression, expressed in umbilical endothelial cells (at protein level). Abundantly expressed in skeletal muscle and ovary, with lower expression in the heart, placenta, lung, liver, pancreas, spleen, testis and small intestine. Weakly expressed in the brain, thymus, prostate and mucosal lining of the colon.

The protein localises to the cytoplasm. It is found in the nucleus. Functionally, transcription factor that is the main target of insulin signaling and regulates metabolic homeostasis in response to oxidative stress. Binds to the insulin response element (IRE) with consensus sequence 5'-TT[G/A]TTTTG-3' and the related Daf-16 family binding element (DBE) with consensus sequence 5'-TT[G/A]TTTAC-3'. Activity suppressed by insulin. Main regulator of redox balance and osteoblast numbers and controls bone mass. Orchestrates the endocrine function of the skeleton in regulating glucose metabolism. Also acts as a key regulator of chondrogenic commitment of skeletal progenitor cells in response to lipid availability: when lipids levels are low, translocates to the nucleus and promotes expression of SOX9, which induces chondrogenic commitment and suppresses fatty acid oxidation. Acts synergistically with ATF4 to suppress osteocalcin/BGLAP activity, increasing glucose levels and triggering glucose intolerance and insulin insensitivity. Also suppresses the transcriptional activity of RUNX2, an upstream activator of osteocalcin/BGLAP. Acts as an inhibitor of glucose sensing in pancreatic beta cells by acting as a transcription repressor and suppressing expression of PDX1. In hepatocytes, promotes gluconeogenesis by acting together with PPARGC1A and CEBPA to activate the expression of genes such as IGFBP1, G6PC1 and PCK1. Also promotes gluconeogenesis by directly promoting expression of PPARGC1A and G6PC1. Important regulator of cell death acting downstream of CDK1, PKB/AKT1 and STK4/MST1. Promotes neural cell death. Mediates insulin action on adipose tissue. Regulates the expression of adipogenic genes such as PPARG during preadipocyte differentiation and, adipocyte size and adipose tissue-specific gene expression in response to excessive calorie intake. Regulates the transcriptional activity of GADD45A and repair of nitric oxide-damaged DNA in beta-cells. Required for the autophagic cell death induction in response to starvation or oxidative stress in a transcription-independent manner. Mediates the function of MLIP in cardiomyocytes hypertrophy and cardiac remodeling. Positive regulator of apoptosis in cardiac smooth muscle cells as a result of its transcriptional activation of pro-apoptotic genes. Regulates endothelial cell (EC) viability and apoptosis in a PPIA/CYPA-dependent manner via transcription of CCL2 and BCL2L11 which are involved in EC chemotaxis and apoptosis. The chain is Forkhead box protein O1 from Homo sapiens (Human).